Consider the following 352-residue polypeptide: Plant intracellular Ras-group-related LRR protein 1 (352 aa).

The tract at residues 1–25 (MREMGEKRRRGHLNPAGFAGGLHDH) is disordered. LRR repeat units follow at residues 29–52 (KNEEHKLDMSGMSMDALPHLTMSL), 53–75 (GQVTILDLSNNNLESIPESIIAR), 77–99 (LNVVVLDVRSNQLKSLPNSIGCL), 100–122 (SKLKVLNVSGNLLESLPNTIEEC), 124–146 (ALEELHANFNELTKLPDTLGFEL), 147–169 (HSLRKLSVNSNKLAQLPSSTSHM), 171–192 (ALRALDARLNCLRALPDGLENL), 195–217 (LEALNVSQNFQFLRELPYAVGLL), 218–241 (ASLRELDVSYNSIAALPDSMGCLT), and 243–263 (LARFSAVGNPLVSPPMDVVEQ). The GVYW; degenerate motif lies at 264–271 (GLDAMRAY).

It belongs to the SHOC2 family. In terms of tissue distribution, widely expressed but at a lower level in seedlings and stems.

Its function is as follows. Leucine-rich repeat protein that likely mediates protein interactions, possibly in the context of signal transduction. The protein is Plant intracellular Ras-group-related LRR protein 1 (IRL1) of Oryza sativa subsp. japonica (Rice).